Consider the following 78-residue polypeptide: Large ribosomal subunit protein bL28 (78 aa).

Residues 1 to 28 (MSAYCQVTGRKPGFGKQVSHSHRHTSRR) are disordered.

It belongs to the bacterial ribosomal protein bL28 family.

The protein is Large ribosomal subunit protein bL28 of Corynebacterium urealyticum (strain ATCC 43042 / DSM 7109).